Here is a 248-residue protein sequence, read N- to C-terminus: 1-(5-phosphoribosyl)-5-[(5-phosphoribosylamino)methylideneamino] imidazole-4-carboxamide isomerase (248 aa).

The active-site Proton acceptor is aspartate 8. The active-site Proton donor is the aspartate 129.

Belongs to the HisA/HisF family.

The protein resides in the cytoplasm. It catalyses the reaction 1-(5-phospho-beta-D-ribosyl)-5-[(5-phospho-beta-D-ribosylamino)methylideneamino]imidazole-4-carboxamide = 5-[(5-phospho-1-deoxy-D-ribulos-1-ylimino)methylamino]-1-(5-phospho-beta-D-ribosyl)imidazole-4-carboxamide. It functions in the pathway amino-acid biosynthesis; L-histidine biosynthesis; L-histidine from 5-phospho-alpha-D-ribose 1-diphosphate: step 4/9. The chain is 1-(5-phosphoribosyl)-5-[(5-phosphoribosylamino)methylideneamino] imidazole-4-carboxamide isomerase from Rhizobium leguminosarum bv. trifolii (strain WSM2304).